A 509-amino-acid polypeptide reads, in one-letter code: MDSASLAVVVWAILLVLWLRRIFGQRSSLPLPPAPPGYPVIGNLLDLANNDVHIRARHWSRNFDDDVISLKVLGKTMIILNSPTAVSDLFDKRASNYSDRPDMPMIVDFIGWDWTFALMRYGPRWKEHRRVFNNHFNIGTSGASEDRHIQLRICRELLSLMFQSPSKYLENLRHYTGHIILKRTYGHTVVDEEDPYIRLVEAASQSTSEAAVPGAFLVDLFPSMKYIPEWFPGAQFKRKAREWRKLSEAMINAPYDMAKGKFDEGNAEACFVSACLEQNKTASGQGLSEELIKDTAAVAYAAGADTSVSTLTTFILAMTLYPDVQKAAQAELDALLGGERLPDFGDKTRLPYVTAILKEVLRWIPVLPMAVPHRAVNADTYKGYYIPAGAFVYGNAWAILHNPDIFADPETFRPDRFIENPTLLNPIDNGVFGFGRRACAGRVMALDTMWIAMASILAVFDISKAVDERGNEITPPVKLSPGTISHPAPFPCIIKPRSKAALELITQDD.

A helical transmembrane segment spans residues alanine 4–glycine 24. 2 N-linked (GlcNAc...) asparagine glycosylation sites follow: asparagine 96 and asparagine 279. A heme-binding site is contributed by cysteine 439.

This sequence belongs to the cytochrome P450 family. Requires heme as cofactor.

It is found in the membrane. The protein operates within secondary metabolite biosynthesis. In terms of biological role, cytochrome P450 monooxygenase, part of the gene cluster that mediates the biosynthesis of melleolides, a range of antifungal and phytotoxic polyketide derivatives composed of an orsellinic acid (OA) moiety esterified to various sesquiterpene alcohols. The first step in melleolides biosynthesis is performed by the delta(6)-protoilludene synthase PRO1 which catalyzes the cyclization of farnesyl diphosphate to protoilludene. The orsellinic acid synthase armB produces OA by condensing acetyl-CoA with 3 malonyl-CoA units in a three-round chain elongation reaction folowed by a C2-C7 ring closure. ArmB further catalyzes the trans-esterification of OA to the various sesquiterpene alcohols resulting from the hydroxylation of protoilludene. The melleolides cluster also includes 5 cytochrome P450 monooxygenases, 4 NAD(+)-dependent oxidoreductases, one flavin-dependent oxidoreductase, and one O-methyltransferase. The cytochrome P450 monooxygenases may be involved in protoilludene hydroxylation to elaborate melleolides with multiple alcohol groups, such as melleolide D, which carries alcohol functionalities at C-4, C-5, C-10, and C-13. The role of the NAD(+)-dependent enzymes remains unknown. Numerous melleolides, including arnamial, show 5'-O-methylation of the aromatic moiety which may be catalyzed by the methyltransferase encoded in the cluster. The flavin-dependent oxidoreductase might represent the dehydrogenase yielding the aldehyde in position 1 of arnamial and other melleolides. Finally, several halogenase localized outside of the cluster, are able to catalyze the transfer of a single chlorine atom to the melleolide backbone, resulting in a 6'-chloromelleolide product. The polypeptide is Cytochrome P450 monooxygenase ARMGADRAFT_974139 (Armillaria gallica (Bulbous honey fungus)).